The following is a 108-amino-acid chain: U-scoloptoxin(16)-Sm1a (108 aa).

The N-terminal stretch at 1 to 19 (MNLFLVLFVFSFSVSQFFA) is a signal peptide.

This sequence belongs to the scoloptoxin-16 family. In terms of processing, contains 4 disulfide bonds. Expressed by the venom gland.

Its subcellular location is the secreted. The chain is U-scoloptoxin(16)-Sm1a from Scolopendra morsitans (Tanzanian blue ringleg centipede).